A 139-amino-acid chain; its full sequence is Small ribosomal subunit protein uS12m (139 aa).

A mitochondrion-targeting transit peptide spans 1 to 29; it reads MSWPGLLYGLTTSLSRGLALAPQLWAARS.

This sequence belongs to the universal ribosomal protein uS12 family. As to quaternary structure, component of the mitochondrial ribosome small subunit (28S) which comprises a 12S rRNA and about 30 distinct proteins.

Its subcellular location is the mitochondrion. In Mus musculus (Mouse), this protein is Small ribosomal subunit protein uS12m (Mrps12).